Consider the following 296-residue polypeptide: MAGLRQIAFYGKGGIGKSTTSQNTLAALVDLGQKILIVGCDPKADSTRLILNAKAQDTVLHLAAKEGSVEDLEVEDVLKVGYKGIKCVESGGPEPGVGCAGRGVITSINFLEENGAYDDVDYVSYDVLGDVVCGGFAMPIRENKAQEIYIVMSGEMMALYAANNIAKGILKYAHSGGVRLGGLICNERQTDRELDLAEALAAKLNSRLIHFVPRDNIVQHAELRKMTVIQYAPESQQAAEYRALADKIHANSGQGTVPTPITMEELEDMLLDFGVMKTDEQMLAELQAKEAAAAAQ.

ATP is bound at residue 11–18 (GKGGIGKS). [4Fe-4S] cluster is bound at residue Cys99. Arg102 carries the ADP-ribosylarginine; by dinitrogenase reductase ADP-ribosyltransferase modification. Residue Cys133 coordinates [4Fe-4S] cluster.

Belongs to the NifH/BchL/ChlL family. As to quaternary structure, homodimer. [4Fe-4S] cluster is required as a cofactor. Post-translationally, the reversible ADP-ribosylation of Arg-102 inactivates the nitrogenase reductase and regulates nitrogenase activity.

The catalysed reaction is N2 + 8 reduced [2Fe-2S]-[ferredoxin] + 16 ATP + 16 H2O = H2 + 8 oxidized [2Fe-2S]-[ferredoxin] + 2 NH4(+) + 16 ADP + 16 phosphate + 6 H(+). In terms of biological role, the key enzymatic reactions in nitrogen fixation are catalyzed by the nitrogenase complex, which has 2 components: the iron protein and the molybdenum-iron protein. The polypeptide is Nitrogenase iron protein (nifH1) (Sinorhizobium fredii (strain NBRC 101917 / NGR234)).